We begin with the raw amino-acid sequence, 37 residues long: Potassium channel toxin alpha-KTx 15.3 (37 aa).

At Gln1 the chain carries Pyrrolidone carboxylic acid. 3 disulfides stabilise this stretch: Cys8–Cys28, Cys13–Cys33, and Cys17–Cys35.

In terms of tissue distribution, expressed by the venom gland.

The protein resides in the secreted. Its function is as follows. Inhibits A-type (Kv4) voltage-gated potassium channels of striated neurons (Ki=131 nM), probably by acting as a pore blocker. Has also been shown to block ERG1/Kv11.1/KCNH2 potassium channels (IC(50)=7.9 uM). The presence of the Kv4-associated proteins DPP6 or DPP10 is mandatory to have high-affinity blockade of Kv4.2/KCND2 and Kv4.3/KCND3 channels (80-90% inhibition at 500 nM of toxin). In contrast, the presence of the Kv4-associated protein KChIP1/KCNIP1 does not enhance the affinity blockade (only 40% inhibition at 500 nM). In adult rat brain, the toxin binds to sites in the striatum, and cerebellum. It shares the same target in rat brain than AaTX1 (AC Q867F4) and BmTX3 (AC Q8I0L5). In DPP6 knockout mice, A-type currents are about 20-fold less affected by the toxin. In rodent models of Parkinson's disease, the toxin reduces motor symptoms and emotional and cognitive symptoms. The protein is Potassium channel toxin alpha-KTx 15.3 of Androctonus mauritanicus mauritanicus (Scorpion).